A 946-amino-acid chain; its full sequence is Inter-alpha-trypsin inhibitor heavy chain H2 (946 aa).

The first 18 residues, 1 to 18 (MKRLTCFFICFFLSEVSG), serve as a signal peptide directing secretion. The propeptide occupies 19–54 (FEIPINGLSEFVDYEDLVELAPGKFQLVAENRRYQR). One can recognise a VIT domain in the interval 56-185 (LPGESEEMME…KVQFELHYQE (130 aa)). At S60 the chain carries Phosphoserine; by FAM20C. Residue N118 is glycosylated (N-linked (GlcNAc...) (complex) asparagine). A disulfide bond links C261 and C264. Residues E282 and E283 each carry the 4-carboxyglutamate modification. In terms of domain architecture, VWFA spans 308 to 468 (PKNILFVIDV…YDFLKRLSNE (161 aa)). Residue N445 is glycosylated (N-linked (GlcNAc...) asparagine). S466 is subject to Phosphoserine; by FAM20C. C650 and C651 are disulfide-bonded. An O-glycosylated at three sites region spans residues 665–679 (STPSWANPSPTPVIS). O-linked (GalNAc...) threonine; partial glycosylation occurs at T666. S673 carries an O-linked (GalNAc...) serine glycan. 2 O-linked (GalNAc...) threonine glycosylation sites follow: T675 and T691. Aspartate 1-(chondroitin 4-sulfate)-ester is present on D702. A propeptide spanning residues 703–946 (PHFIIYLPKS…PQLYSFLKRP (244 aa)) is cleaved from the precursor. S886 is modified (phosphoserine; by FAM20C).

I-alpha-I plasma protease inhibitors are assembled from one or two heavy chains (HC) and one light chain, bikunin. Inter-alpha-inhibitor (I-alpha-I) is composed of ITIH1/HC1, ITIH2/HC2 and bikunin. Heavy chains are linked to bikunin via chondroitin 4-sulfate esterified to the alpha-carboxyl of the C-terminal aspartate after propeptide cleavage. Post-translationally, N- and O-glycosylated. O-glycosylated with core 1 or possibly core 8 glycans. In terms of processing, phosphorylated by FAM20C in the extracellular medium. Plasma.

The protein localises to the secreted. In terms of biological role, may act as a carrier of hyaluronan in serum or as a binding protein between hyaluronan and other matrix protein, including those on cell surfaces in tissues to regulate the localization, synthesis and degradation of hyaluronan which are essential to cells undergoing biological processes. The protein is Inter-alpha-trypsin inhibitor heavy chain H2 (ITIH2) of Homo sapiens (Human).